The following is a 1051-amino-acid chain: Protein transport protein Sec16B (1051 aa).

Over residues 1–23 the composition is skewed to polar residues; that stretch reads MEPWVPQTQGRTTGPSRDTNRGL. Positions 1-109 are disordered; sequence MEPWVPQTQG…PYQRYHTPTP (109 aa). Residues 39-63 show a composition bias toward basic and acidic residues; sequence DKYHQWQDAHKNSKSQQDLRDDHQQ. Residues 64–77 show a composition bias toward polar residues; it reads SHSVSRSGEWSQPV. Phosphoserine occurs at positions 70 and 137. Residues 157 to 203 are disordered; that stretch reads EKHNGTFGANSDTQFQFTSKNPYRDSPASVSGQEQPGEFFPESEAQK. The span at 163 to 177 shows a compositional bias: polar residues; that stretch reads FGANSDTQFQFTSKN. Residues S182, S185, and S245 each carry the phosphoserine modification. The interval 263 to 708 is central conserved domain (CCD); required for localization to endoplasmic reticulum exit sites; it reads APMRFYVPHV…KHKDLEQNRT (446 aa). Positions 703-715 are enriched in basic and acidic residues; that stretch reads LEQNRTGAPRDPD. Disordered stretches follow at residues 703–754, 798–820, and 850–1051; these read LEQN…LWST, SGAS…EDML, and TPAA…TQPC. Positions 737 to 754 are enriched in polar residues; it reads GHQNYSEDSEYSSTLWST. Over residues 798–809 the composition is skewed to low complexity; the sequence is SGASGSSVAVTG. Phosphothreonine is present on T850. 5 positions are modified to phosphoserine: S860, S863, S866, S874, and S875. The segment covering 877–897 has biased composition (basic and acidic residues); the sequence is GADKPSHPDASQKGKLGDGKN. Over residues 900-920 the composition is skewed to low complexity; that stretch reads SSGFGWFSWFRSKPASSVSTS. Positions 921-932 are enriched in acidic residues; that stretch reads GDEDSSDSSDSE. Positions 936–947 are enriched in low complexity; that stretch reads RASSPHHASPGL. Residues 984-993 are compositionally biased toward gly residues; the sequence is EGMGIGGFSG. Positions 1022 to 1037 are enriched in polar residues; it reads NPSQVPQLPTASSLNR.

The protein belongs to the SEC16 family. In terms of assembly, SEC16A and SEC16B are each present in multiple copies in a heteromeric complex. Interacts with TFG. Interacts with SEC13. Liver.

The protein resides in the endoplasmic reticulum membrane. The protein localises to the golgi apparatus membrane. In terms of biological role, plays a role in the organization of the endoplasmic reticulum exit sites (ERES), also known as transitional endoplasmic reticulum (tER). Required for secretory cargo traffic from the endoplasmic reticulum to the Golgi apparatus. Involved in peroxisome biogenesis. Regulates the transport of peroxisomal biogenesis factors PEX3 and PEX16 from the ER to peroxisomes. The sequence is that of Protein transport protein Sec16B (Sec16b) from Mus musculus (Mouse).